A 339-amino-acid chain; its full sequence is Protein FAM131B (339 aa).

The interval 1–22 (MDSTSSLHGSSLHRPSTEQTRT) is disordered. Residues Ser-47, Ser-114, and Ser-117 each carry the phosphoserine modification. Residues 222-339 (GPAFGDSQPS…PLLTQPSTPA (118 aa)) form a disordered region. Composition is skewed to polar residues over residues 239 to 250 (QPASGYSAQEPS) and 324 to 339 (PTTS…STPA). Thr-325 is modified (phosphothreonine). The residue at position 327 (Ser-327) is a Phosphoserine.

The protein belongs to the FAM131 family.

This Bos taurus (Bovine) protein is Protein FAM131B (FAM131B).